Here is a 45-residue protein sequence, read N- to C-terminus: Mu-conotoxin-like Cal 12.1.2g (45 aa).

4 disulfide bridges follow: C3/C16, C11/C28, C18/C33, and C27/C39. At P23 the chain carries 4-hydroxyproline. 2 positions are modified to 6'-bromotryptophan: W37 and W38. 4-hydroxyproline is present on P40.

As to expression, expressed by the venom duct.

It is found in the secreted. Functionally, mu-conotoxins block voltage-gated sodium channels. This toxin reversibly blocks voltage-gated sodium channel in cephalopods, with no alteration in the voltage dependence of sodium conductance or on the kinetics of inactivation. The sequence is that of Mu-conotoxin-like Cal 12.1.2g from Californiconus californicus (California cone).